The following is a 1030-amino-acid chain: E3 ubiquitin-protein ligase mib1 (1030 aa).

The region spanning N6–A74 is the MIB/HERC2 1 domain. Residues H80–S132 form a ZZ-type zinc finger. Zn(2+) contacts are provided by C85, C88, C100, C103, C109, C112, H118, and H122. The MIB/HERC2 2 domain maps to S143–A221. ANK repeat units lie at residues D430–G460, A463–A492, D496–A525, R529–L558, E562–I591, N595–E627, D631–V661, N665–V694, and D698–V727. 2 RING-type zinc fingers span residues C817–K852 and C864–R899. Positions A957–M986 form a coiled coil. The RING-type 3 zinc finger occupies C987 to R1020.

Interacts with deltaA (dla) and deltaD (dld).

It localises to the cytoplasm. The protein resides in the cytoskeleton. It is found in the microtubule organizing center. The protein localises to the centrosome. Its subcellular location is the centriolar satellite. It localises to the cell membrane. The enzyme catalyses S-ubiquitinyl-[E2 ubiquitin-conjugating enzyme]-L-cysteine + [acceptor protein]-L-lysine = [E2 ubiquitin-conjugating enzyme]-L-cysteine + N(6)-ubiquitinyl-[acceptor protein]-L-lysine.. It participates in protein modification; protein ubiquitination. Its function is as follows. E3 ubiquitin-protein ligase that mediates ubiquitination of Delta receptors, which act as ligands of Notch proteins. Positively regulates the Delta-mediated Notch signaling by ubiquitinating the intracellular domain of Delta, leading to endocytosis of Delta receptors. It thereby participates in many processes regulated by the Notch signaling pathway, such as midline cell fate specification prior to germ layer formation, patterning of sensory cell differentiation in the ear, neurogenesis of the hindbrain and commitment to a secretory fate in the intestine. Essential for early embryonic development. This is E3 ubiquitin-protein ligase mib1 (mib1) from Danio rerio (Zebrafish).